The sequence spans 343 residues: MSLKHFLNTQDWSRAELDALLTQAALFKRNKLGSELKGKSIALVFFNPSMRTRTSFELGAFQLGGHAVVLQPGKDAWPIEFNLGTVMDGDTEEHIAEVARVLGRYVDLIGVRAFPKFVDWSKDREDQVLKSFAKYSPVPVINMETITHPCQELAHALALQEHFGTQDLRGKKYVLTWTYHPKPLNTAVANSALTIATRMGMDVTLLCPTPDYILDQRYMDWAAQNVVESGGSLQVSHDIDSAYAGADVVYAKSWGALPFFGNWEPEKPIRDQYQHFIVDERKMALTNNGVFSHCLPLRRNVKATDAVMDSPNCIAIDEAENRLHVQKAIMAALASQAGIGNRE.

Residues 49–52, Trp-77, and Arg-112 contribute to the carbamoyl phosphate site; that span reads SMRT. N(2)-acetyl-L-ornithine is bound at residue Glu-144. 148–151 is a binding site for carbamoyl phosphate; sequence HPCQ. Lys-252 and Leu-295 together coordinate N(2)-acetyl-L-ornithine. Residue 294–295 coordinates carbamoyl phosphate; sequence CL. Lys-302 carries the post-translational modification N6-carboxylysine. Arg-322 contacts carbamoyl phosphate.

It belongs to the aspartate/ornithine carbamoyltransferase superfamily. AOTCase family. As to quaternary structure, homotrimer.

The protein resides in the cytoplasm. It carries out the reaction N(2)-acetyl-L-ornithine + carbamoyl phosphate = N(2)-acetyl-L-citrulline + phosphate + H(+). It participates in amino-acid biosynthesis; L-arginine biosynthesis. With respect to regulation, carboxylation at Lys-302 increases the catalytic activity of the enzyme. Functionally, catalyzes the transfer of the carbamoyl group from carbamoyl phosphate to the delta-amino group of N(2)-acetyl-L-ornithine to produce N(2)-acetyl-L-citrulline. This is a step in an alternative arginine biosynthesis pathway. The enzyme has no activity with ornithine. This is N-acetylornithine carbamoyltransferase from Xanthomonas axonopodis pv. citri (strain 306).